The sequence spans 861 residues: Bifunctional uridylyltransferase/uridylyl-removing enzyme (861 aa).

Residues M1–R321 form a uridylyltransferase region. The tract at residues L322 to T678 is uridylyl-removing. The HD domain maps to V440–L562. 2 consecutive ACT domains span residues E679–R760 and Q788–Y861.

This sequence belongs to the GlnD family. The cofactor is Mg(2+).

The catalysed reaction is [protein-PII]-L-tyrosine + UTP = [protein-PII]-uridylyl-L-tyrosine + diphosphate. It catalyses the reaction [protein-PII]-uridylyl-L-tyrosine + H2O = [protein-PII]-L-tyrosine + UMP + H(+). Uridylyltransferase (UTase) activity is inhibited by glutamine, while glutamine activates uridylyl-removing (UR) activity. Functionally, modifies, by uridylylation and deuridylylation, the PII regulatory proteins (GlnB and homologs), in response to the nitrogen status of the cell that GlnD senses through the glutamine level. Under low glutamine levels, catalyzes the conversion of the PII proteins and UTP to PII-UMP and PPi, while under higher glutamine levels, GlnD hydrolyzes PII-UMP to PII and UMP (deuridylylation). Thus, controls uridylylation state and activity of the PII proteins, and plays an important role in the regulation of nitrogen assimilation and metabolism. The polypeptide is Bifunctional uridylyltransferase/uridylyl-removing enzyme (Legionella pneumophila (strain Corby)).